The following is a 189-amino-acid chain: Dual specificity phosphatase 29 (189 aa).

The region spanning 33 to 182 (HVNEVWPGVY…LRELDTHLQE (150 aa)) is the Tyrosine-protein phosphatase domain. 126-133 (HCVMGRSR) is a binding site for substrate. Cysteine 127 acts as the Phosphocysteine intermediate in catalysis.

Belongs to the protein-tyrosine phosphatase family. Non-receptor class dual specificity subfamily.

The protein resides in the cytoplasm. The protein localises to the nucleus. The catalysed reaction is O-phospho-L-tyrosyl-[protein] + H2O = L-tyrosyl-[protein] + phosphate. It catalyses the reaction O-phospho-L-seryl-[protein] + H2O = L-seryl-[protein] + phosphate. It carries out the reaction O-phospho-L-threonyl-[protein] + H2O = L-threonyl-[protein] + phosphate. In terms of biological role, dual specificity phosphatase able to dephosphorylate phosphotyrosine, phosphoserine and phosphothreonine residues within the same substrate, with a preference for phosphotyrosine as a substrate. Involved in the modulation of AMPK and MAPK1/2 signaling pathways. This Danio rerio (Zebrafish) protein is Dual specificity phosphatase 29 (dusp29).